Here is a 316-residue protein sequence, read N- to C-terminus: Arabinooligosaccharides transport system permease protein AraP (316 aa).

The next 7 membrane-spanning stretches (helical) occupy residues 32 to 52 (VVPY…SFYP), 94 to 114 (TYMI…AVLL), 128 to 148 (ALFL…RLMF), 178 to 198 (MFLM…LYFL), 224 to 244 (FYVT…ISVI), 254 to 274 (FVFW…GYLY), and 283 to 303 (MGFG…ISIT). Residues 89–304 (LQNTTTYMIL…LIIFVISITQ (216 aa)) enclose the ABC transmembrane type-1 domain.

This sequence belongs to the binding-protein-dependent transport system permease family. MalFG subfamily. The complex is composed of two ATP-binding proteins (MsmX), two transmembrane proteins (AraP and AraQ) and a solute-binding protein (AraN).

The protein localises to the cell membrane. Part of the ABC transporter complex AraNPQ involved in the uptake of arabinooligosaccharides. Responsible for the translocation of the substrate across the membrane. The chain is Arabinooligosaccharides transport system permease protein AraP (araP) from Halalkalibacterium halodurans (strain ATCC BAA-125 / DSM 18197 / FERM 7344 / JCM 9153 / C-125) (Bacillus halodurans).